The chain runs to 36 residues: Probable non-specific lipid-transfer protein (36 aa).

Belongs to the plant LTP family. Phosphorylated by Ca(2+)-dependent protein kinase.

Functionally, plant non-specific lipid-transfer proteins transfer phospholipids as well as galactolipids across membranes. May play a role in wax or cutin deposition in the cell walls of expanding epidermal cells and certain secretory tissues. The polypeptide is Probable non-specific lipid-transfer protein (Pinus pinea (Italian stone pine)).